Reading from the N-terminus, the 542-residue chain is Malolactic enzyme (542 aa).

Tyr-92 functions as the Proton donor in the catalytic mechanism. Lys-165 acts as the Proton acceptor in catalysis. Lys-165 is a binding site for substrate. Mn(2+) contacts are provided by Glu-236, Asp-237, and Asp-260. Residues 293-296, Asn-405, and Asn-450 contribute to the NAD(+) site; that span reads AGTA. Residue Asn-450 coordinates substrate.

This sequence belongs to the malic enzymes family. Homodimer. Mn(2+) is required as a cofactor. It depends on NAD(+) as a cofactor.

It catalyses the reaction (S)-malate + H(+) = (S)-lactate + CO2. Its activity is regulated as follows. Oxamate, fructose-1,6-diphosphate and L-lactate act as non-competitive inhibitors, whereas succinate, citrate and tartrate isomers produce a competitive inhibition. Involved in the malolactic fermentation (MLF) of wine, which results in a natural decrease in acidity and favorable changes in wine flavors. Catalyzes the decarboxylation of L-malate to L-lactate. The polypeptide is Malolactic enzyme (mleS) (Leuconostoc mesenteroides).